The primary structure comprises 273 residues: 4-hydroxy-tetrahydrodipicolinate reductase (273 aa).

Residues 11–16 and Glu36 each bind NAD(+); that span reads GAGGRM. Arg37 is a binding site for NADP(+). Residues 100-102 and 124-127 each bind NAD(+); these read GTT and AANY. The Proton donor/acceptor role is filled by His157. His158 serves as a coordination point for (S)-2,3,4,5-tetrahydrodipicolinate. The active-site Proton donor is Lys161. (S)-2,3,4,5-tetrahydrodipicolinate is bound at residue 167-168; the sequence is GT.

Belongs to the DapB family.

Its subcellular location is the cytoplasm. The catalysed reaction is (S)-2,3,4,5-tetrahydrodipicolinate + NAD(+) + H2O = (2S,4S)-4-hydroxy-2,3,4,5-tetrahydrodipicolinate + NADH + H(+). It carries out the reaction (S)-2,3,4,5-tetrahydrodipicolinate + NADP(+) + H2O = (2S,4S)-4-hydroxy-2,3,4,5-tetrahydrodipicolinate + NADPH + H(+). It participates in amino-acid biosynthesis; L-lysine biosynthesis via DAP pathway; (S)-tetrahydrodipicolinate from L-aspartate: step 4/4. Its function is as follows. Catalyzes the conversion of 4-hydroxy-tetrahydrodipicolinate (HTPA) to tetrahydrodipicolinate. The sequence is that of 4-hydroxy-tetrahydrodipicolinate reductase from Acinetobacter baylyi (strain ATCC 33305 / BD413 / ADP1).